A 204-amino-acid chain; its full sequence is Imidazoleglycerol-phosphate dehydratase (204 aa).

The disordered stretch occupies residues 183–204 (DPRMDGITPSTKGTLSESGDSQ). The segment covering 190–204 (TPSTKGTLSESGDSQ) has biased composition (polar residues).

The protein belongs to the imidazoleglycerol-phosphate dehydratase family.

It localises to the cytoplasm. The enzyme catalyses D-erythro-1-(imidazol-4-yl)glycerol 3-phosphate = 3-(imidazol-4-yl)-2-oxopropyl phosphate + H2O. Its pathway is amino-acid biosynthesis; L-histidine biosynthesis; L-histidine from 5-phospho-alpha-D-ribose 1-diphosphate: step 6/9. The polypeptide is Imidazoleglycerol-phosphate dehydratase (Alcanivorax borkumensis (strain ATCC 700651 / DSM 11573 / NCIMB 13689 / SK2)).